A 482-amino-acid chain; its full sequence is Probable glycine dehydrogenase (decarboxylating) subunit 2 (482 aa).

K264 is subject to N6-(pyridoxal phosphate)lysine.

The protein belongs to the GcvP family. C-terminal subunit subfamily. As to quaternary structure, the glycine cleavage system is composed of four proteins: P, T, L and H. In this organism, the P 'protein' is a heterodimer of two subunits. It depends on pyridoxal 5'-phosphate as a cofactor.

It carries out the reaction N(6)-[(R)-lipoyl]-L-lysyl-[glycine-cleavage complex H protein] + glycine + H(+) = N(6)-[(R)-S(8)-aminomethyldihydrolipoyl]-L-lysyl-[glycine-cleavage complex H protein] + CO2. The glycine cleavage system catalyzes the degradation of glycine. The P protein binds the alpha-amino group of glycine through its pyridoxal phosphate cofactor; CO(2) is released and the remaining methylamine moiety is then transferred to the lipoamide cofactor of the H protein. The sequence is that of Probable glycine dehydrogenase (decarboxylating) subunit 2 from Treponema denticola (strain ATCC 35405 / DSM 14222 / CIP 103919 / JCM 8153 / KCTC 15104).